The chain runs to 132 residues: Fatty acid-binding protein type 2 (132 aa).

At A2 the chain carries N-acetylalanine.

This sequence belongs to the calycin superfamily. Fatty-acid binding protein (FABP) family.

The polypeptide is Fatty acid-binding protein type 2 (Fasciola hepatica (Liver fluke)).